Reading from the N-terminus, the 285-residue chain is Bifunctional protein FolD (285 aa).

NADP(+)-binding positions include 166–168 (GAS), S191, and I232.

This sequence belongs to the tetrahydrofolate dehydrogenase/cyclohydrolase family. In terms of assembly, homodimer.

The catalysed reaction is (6R)-5,10-methylene-5,6,7,8-tetrahydrofolate + NADP(+) = (6R)-5,10-methenyltetrahydrofolate + NADPH. The enzyme catalyses (6R)-5,10-methenyltetrahydrofolate + H2O = (6R)-10-formyltetrahydrofolate + H(+). It functions in the pathway one-carbon metabolism; tetrahydrofolate interconversion. Catalyzes the oxidation of 5,10-methylenetetrahydrofolate to 5,10-methenyltetrahydrofolate and then the hydrolysis of 5,10-methenyltetrahydrofolate to 10-formyltetrahydrofolate. The sequence is that of Bifunctional protein FolD from Edwardsiella ictaluri (strain 93-146).